Consider the following 81-residue polypeptide: Neuronatin (81 aa).

It belongs to the neuronatin family.

In terms of biological role, may participate in the maintenance of segment identity in the hindbrain and pituitary development, and maturation or maintenance of the overall structure of the nervous system. May function as a regulatory subunit of ion channels. The sequence is that of Neuronatin (NNAT) from Mesocricetus auratus (Golden hamster).